Consider the following 423-residue polypeptide: Glutamate-1-semialdehyde 2,1-aminomutase (423 aa).

At K262 the chain carries N6-(pyridoxal phosphate)lysine.

The protein belongs to the class-III pyridoxal-phosphate-dependent aminotransferase family. HemL subfamily. Homodimer. Requires pyridoxal 5'-phosphate as cofactor.

The protein localises to the cytoplasm. It carries out the reaction (S)-4-amino-5-oxopentanoate = 5-aminolevulinate. Its pathway is porphyrin-containing compound metabolism; protoporphyrin-IX biosynthesis; 5-aminolevulinate from L-glutamyl-tRNA(Glu): step 2/2. This chain is Glutamate-1-semialdehyde 2,1-aminomutase, found in Campylobacter fetus subsp. fetus (strain 82-40).